The sequence spans 61 residues: Large ribosomal subunit protein uL30 (61 aa).

The protein belongs to the universal ribosomal protein uL30 family. As to quaternary structure, part of the 50S ribosomal subunit.

In Jannaschia sp. (strain CCS1), this protein is Large ribosomal subunit protein uL30.